Consider the following 87-residue polypeptide: Neutrophil antibiotic peptide NP-3B (87 aa).

A signal peptide spans 1–19 (MRTLILLTTLLLLALHTQA). Positions 20-58 (ESPQGSTKEAPDEEQDISVFFGGDKGTALQDAAVKAGVT) are excised as a propeptide. 3 disulfide bridges follow: Cys-59–Cys-87, Cys-61–Cys-76, and Cys-66–Cys-86.

The protein belongs to the alpha-defensin family.

It localises to the secreted. Its function is as follows. Active in vitro against S.aureus, fungi, Gram-positive and Gram-negative bacteria and to a lesser extent against an enveloped virus. This chain is Neutrophil antibiotic peptide NP-3B, found in Rattus norvegicus (Rat).